The chain runs to 482 residues: tRNA sulfurtransferase (482 aa).

The region spanning 61 to 165 is the THUMP domain; that stretch reads AEVLEILTHT…NDRLNQVLAS (105 aa). Residues 183–184, Lys265, Gly287, and Gln296 contribute to the ATP site; that span reads LI. An intrachain disulfide couples Cys344 to Cys456. The Rhodanese domain occupies 404–482; the sequence is VEEHAIVLDI…GFNNVKVYRP (79 aa). Catalysis depends on Cys456, which acts as the Cysteine persulfide intermediate.

This sequence belongs to the ThiI family.

The protein resides in the cytoplasm. The enzyme catalyses [ThiI sulfur-carrier protein]-S-sulfanyl-L-cysteine + a uridine in tRNA + 2 reduced [2Fe-2S]-[ferredoxin] + ATP + H(+) = [ThiI sulfur-carrier protein]-L-cysteine + a 4-thiouridine in tRNA + 2 oxidized [2Fe-2S]-[ferredoxin] + AMP + diphosphate. It catalyses the reaction [ThiS sulfur-carrier protein]-C-terminal Gly-Gly-AMP + S-sulfanyl-L-cysteinyl-[cysteine desulfurase] + AH2 = [ThiS sulfur-carrier protein]-C-terminal-Gly-aminoethanethioate + L-cysteinyl-[cysteine desulfurase] + A + AMP + 2 H(+). It participates in cofactor biosynthesis; thiamine diphosphate biosynthesis. In terms of biological role, catalyzes the ATP-dependent transfer of a sulfur to tRNA to produce 4-thiouridine in position 8 of tRNAs, which functions as a near-UV photosensor. Also catalyzes the transfer of sulfur to the sulfur carrier protein ThiS, forming ThiS-thiocarboxylate. This is a step in the synthesis of thiazole, in the thiamine biosynthesis pathway. The sulfur is donated as persulfide by IscS. This is tRNA sulfurtransferase from Vibrio campbellii (strain ATCC BAA-1116).